The following is a 509-amino-acid chain: Methylthioalkylmalate synthase 1-1, chloroplastic (509 aa).

The transit peptide at 1-55 (MSFSPTYSIVMASPLLTSSQMIPTTGSTVGFRSILPFGSLRLTRPYKKTSLFISY) directs the protein to the chloroplast. A Pyruvate carboxyltransferase domain is found at 91–365 (VRVYDTTLRD…YTRIDTRQIM (275 aa)). D100, H298, and H300 together coordinate Mn(2+).

It belongs to the alpha-IPM synthase/homocitrate synthase family. In terms of assembly, monomer. Mn(2+) is required as a cofactor. Requires Co(2+) as cofactor.

It is found in the plastid. The protein resides in the chloroplast. The catalysed reaction is 4-methylsulfanyl-2-oxobutanoate + acetyl-CoA + H2O = 2-(2-methylsulfanyl)ethylmalate + CoA + H(+). It participates in secondary metabolite biosynthesis. Its activity is regulated as follows. Inhibited by EDTA, Cu(2+) and Zn(2+). Its function is as follows. Determines the side chain length of aliphatic glucosinolate structures. Involved in the biosynthesis of glucosinolate derivative natural products such as 6-(methylsulfinyl)hexylisothiocyanate (6-MSITC), a compound found in wasabi with diverse health-promoting properties. Catalyzes the conversion of 4-methylsulfanyl-2-oxobutanoate (4-MTOB) into 2-(2-methylsulfanyl)ethylmalate (2-(2-MT)EM). In Eutrema japonicum (Wasabi plant), this protein is Methylthioalkylmalate synthase 1-1, chloroplastic.